The sequence spans 156 residues: PopC secretion inhibitor (156 aa).

Positions 1-89 (MNPGSAPWER…PVRSRAEVHQ (89 aa)) are disordered. Basic and acidic residues predominate over residues 8-28 (WERRTRERMRAMSRKNGEWGD).

Interacts with PopC in non-starving cells.

Its subcellular location is the cytoplasm. With respect to regulation, in response to starvation, RelA is activated resulting in the accumulation of (p)ppGpp, which causes the degradation of PopD in an FtsH(D)-dependent manner, thereby releasing pre-formed PopC for secretion. Inhibitor of protease PopC. In non-starving cells, forms a cytoplasmic complex with PopC and inhibits PopC secretion and activity. The polypeptide is PopC secretion inhibitor (Myxococcus xanthus (strain DK1622)).